Consider the following 86-residue polypeptide: Probable acyl carrier protein CCNA_01221 (86 aa).

The 78-residue stretch at 6-83 (TVTDLSLREI…DLSKLINDLR (78 aa)) folds into the Carrier domain. Serine 43 is subject to O-(pantetheine 4'-phosphoryl)serine.

It belongs to the acyl carrier protein (ACP) family.

It participates in lipid metabolism; sphingolipid metabolism. In terms of biological role, involved in de novo bacterial ceramide synthesis. The sequence is that of Probable acyl carrier protein CCNA_01221 from Caulobacter vibrioides (strain NA1000 / CB15N) (Caulobacter crescentus).